The sequence spans 538 residues: Chaperonin GroEL 1 (538 aa).

Residues 30–33, K51, 87–91, G415, 479–481, and D495 each bind ATP; these read TLGP, DGTTT, and NAA.

This sequence belongs to the chaperonin (HSP60) family. In terms of assembly, forms a cylinder of 14 subunits composed of two heptameric rings stacked back-to-back. Interacts with the co-chaperonin GroES.

It is found in the cytoplasm. It catalyses the reaction ATP + H2O + a folded polypeptide = ADP + phosphate + an unfolded polypeptide.. Its function is as follows. Together with its co-chaperonin GroES, plays an essential role in assisting protein folding. The GroEL-GroES system forms a nano-cage that allows encapsulation of the non-native substrate proteins and provides a physical environment optimized to promote and accelerate protein folding. The protein is Chaperonin GroEL 1 of Chromobacterium violaceum (strain ATCC 12472 / DSM 30191 / JCM 1249 / CCUG 213 / NBRC 12614 / NCIMB 9131 / NCTC 9757 / MK).